The sequence spans 450 residues: Phosphoglucosamine mutase 2 (450 aa).

The Phosphoserine intermediate role is filled by Ser101. Mg(2+) is bound by residues Ser101, Asp245, Asp247, and Asp249. The residue at position 101 (Ser101) is a Phosphoserine.

This sequence belongs to the phosphohexose mutase family. Mg(2+) is required as a cofactor. In terms of processing, activated by phosphorylation.

The catalysed reaction is alpha-D-glucosamine 1-phosphate = D-glucosamine 6-phosphate. Its function is as follows. Catalyzes the conversion of glucosamine-6-phosphate to glucosamine-1-phosphate. The polypeptide is Phosphoglucosamine mutase 2 (Shewanella sp. (strain MR-4)).